The primary structure comprises 222 residues: 3-demethoxyubiquinol 3-hydroxylase (222 aa).

Residues Glu-71, Glu-101, His-104, Glu-153, Glu-185, and His-188 each contribute to the Fe cation site.

Belongs to the COQ7 family. Fe cation serves as cofactor.

It is found in the cell membrane. The catalysed reaction is a 5-methoxy-2-methyl-3-(all-trans-polyprenyl)benzene-1,4-diol + AH2 + O2 = a 3-demethylubiquinol + A + H2O. The protein operates within cofactor biosynthesis; ubiquinone biosynthesis. Functionally, catalyzes the hydroxylation of 2-nonaprenyl-3-methyl-6-methoxy-1,4-benzoquinol during ubiquinone biosynthesis. The protein is 3-demethoxyubiquinol 3-hydroxylase of Bordetella pertussis (strain Tohama I / ATCC BAA-589 / NCTC 13251).